We begin with the raw amino-acid sequence, 791 residues long: Phosphoenolpyruvate synthase (791 aa).

The residue at position 416 (Thr-416) is a Phosphothreonine. His-418 functions as the Tele-phosphohistidine intermediate in the catalytic mechanism. Substrate is bound by residues Arg-508, Arg-575, Glu-677, Gly-698, Ser-699, Asn-700, and Asp-701. Mg(2+) is bound at residue Glu-677. Asp-701 is a Mg(2+) binding site. The residue at position 744 (Tyr-744) is a Phosphotyrosine. Cys-748 acts as the Proton donor in catalysis.

It belongs to the PEP-utilizing enzyme family. Requires Mg(2+) as cofactor.

It carries out the reaction pyruvate + ATP + H2O = phosphoenolpyruvate + AMP + phosphate + 2 H(+). Its pathway is carbohydrate biosynthesis; gluconeogenesis. Functionally, catalyzes the phosphorylation of pyruvate to phosphoenolpyruvate. The chain is Phosphoenolpyruvate synthase (ppsA) from Pseudomonas aeruginosa (strain UCBPP-PA14).